Consider the following 940-residue polypeptide: PTS system glucose-specific EIICBA component (940 aa).

The PTS EIIC type-1; first part domain occupies 1-284; sequence MQIKAQDTGQ…YAPLWYTSAG (284 aa). Helical transmembrane passes span 43–63, 83–103, 112–132, 175–195, and 209–229; these read LMIP…GDAI, GGDV…AITF, FSAF…ILPF, VFGG…FYAI, and FVPI…LMIW. The segment at 285–478 is unknown; sequence GSLQEIVNQQ…VNSFRVAVES (194 aa). A PTS EIIC type-1; second part domain is found at 479 to 630; that stretch reads LNPAQYSQGK…FNLATPGRGG (152 aa). The next 5 helical transmembrane spans lie at 487–507, 515–535, 537–557, 564–584, and 598–618; these read GKFP…ILAA, AASI…TEPF, FTFL…LAAV, ILGA…ILYG, and LVPI…YFLI. Residues 661-743 enclose the PTS EIIB type-1 domain; sequence QIEAGILLQA…QDIIQGKVNW (83 aa). Cys-683 functions as the Phosphocysteine intermediate; for EIIB activity in the catalytic mechanism. The 114-residue stretch at 794–907 folds into the PTS EIIA type-1 domain; the sequence is DETFKQKLVG…NPITPFVVMK (114 aa). His-847 serves as the catalytic Tele-phosphohistidine intermediate; for EIIA activity.

It is found in the cell membrane. It catalyses the reaction N(pros)-phospho-L-histidyl-[protein] + D-glucose(out) = D-glucose 6-phosphate(in) + L-histidyl-[protein]. Functionally, the phosphoenolpyruvate-dependent sugar phosphotransferase system (sugar PTS), a major carbohydrate active transport system, catalyzes the phosphorylation of incoming sugar substrates concomitantly with their translocation across the cell membrane. This system is involved in glucose transport. The polypeptide is PTS system glucose-specific EIICBA component (ptsG) (Mycoplasma pneumoniae (strain ATCC 29342 / M129 / Subtype 1) (Mycoplasmoides pneumoniae)).